The following is a 257-amino-acid chain: Imidazole glycerol phosphate synthase subunit HisF (257 aa).

Catalysis depends on residues Asp-12 and Asp-131.

It belongs to the HisA/HisF family. As to quaternary structure, heterodimer of HisH and HisF.

The protein localises to the cytoplasm. It carries out the reaction 5-[(5-phospho-1-deoxy-D-ribulos-1-ylimino)methylamino]-1-(5-phospho-beta-D-ribosyl)imidazole-4-carboxamide + L-glutamine = D-erythro-1-(imidazol-4-yl)glycerol 3-phosphate + 5-amino-1-(5-phospho-beta-D-ribosyl)imidazole-4-carboxamide + L-glutamate + H(+). It participates in amino-acid biosynthesis; L-histidine biosynthesis; L-histidine from 5-phospho-alpha-D-ribose 1-diphosphate: step 5/9. Functionally, IGPS catalyzes the conversion of PRFAR and glutamine to IGP, AICAR and glutamate. The HisF subunit catalyzes the cyclization activity that produces IGP and AICAR from PRFAR using the ammonia provided by the HisH subunit. The polypeptide is Imidazole glycerol phosphate synthase subunit HisF (Marinomonas sp. (strain MWYL1)).